The sequence spans 492 residues: Catalase isozyme 1 (492 aa).

Active-site residues include His65 and Asn138. Tyr348 contributes to the heme binding site.

This sequence belongs to the catalase family. In terms of assembly, homotetramer. It depends on heme as a cofactor.

The protein localises to the peroxisome. It catalyses the reaction 2 H2O2 = O2 + 2 H2O. In terms of biological role, occurs in almost all aerobically respiring organisms and serves to protect cells from the toxic effects of hydrogen peroxide. The protein is Catalase isozyme 1 (CAT1) of Gossypium hirsutum (Upland cotton).